The chain runs to 339 residues: Small ribosomal subunit biogenesis GTPase RsgA (339 aa).

The CP-type G domain occupies 111-271; it reads MRGLLKPVAA…LIDSPGIREF (161 aa). Residues 159–162 and 213–221 contribute to the GTP site; these read NKAD and GQSGVGKSS. The Zn(2+) site is built by C295, C300, H302, and C308.

It belongs to the TRAFAC class YlqF/YawG GTPase family. RsgA subfamily. As to quaternary structure, monomer. Associates with 30S ribosomal subunit, binds 16S rRNA. Zn(2+) serves as cofactor.

It is found in the cytoplasm. In terms of biological role, one of several proteins that assist in the late maturation steps of the functional core of the 30S ribosomal subunit. Helps release RbfA from mature subunits. May play a role in the assembly of ribosomal proteins into the subunit. Circularly permuted GTPase that catalyzes slow GTP hydrolysis, GTPase activity is stimulated by the 30S ribosomal subunit. The polypeptide is Small ribosomal subunit biogenesis GTPase RsgA (Pseudomonas aeruginosa (strain LESB58)).